The chain runs to 429 residues: MNVLIIGSGGREHALGWKAAQNPNVETIFVAPGNAGTALEPKLENVNIAVEDIAGLVAFAKEKAIELTIVGPEVPLVLGVVDAFYEAGLPIFGPTQAAAQLEGSKAFTKDFLARHQIPTAAYANFTDIEPALAYVREQGAPIVVKADGLAAGKGVIVAMTLEEAEEAIKDMLAGNAFGEAGSRVVIEEFLDGEEASFIVMVDGENVLPMATSQDHKRVGDKDTGPNTGGMGAYSPAPVVTPEIHNRVMQEVIFPTVRGMAAEGNPYTGFLYAGLMIDKDGTPKVIEYNCRFGDPETQPIMMRMESDLVELCLAAIDKKLDQVESKWDPRASIGIVLAAGGYPAAYNKGDVISGLPQVEIEGEKVFHAGTENKEGDIVTNGGRVLCATALGNSVSEAQQRAYELAKQIRWEGMFHRNDIGYRAIAREQQK.

The region spanning 109-316 is the ATP-grasp domain; the sequence is KDFLARHQIP…LVELCLAAID (208 aa). Residue 135 to 196 coordinates ATP; sequence VREQGAPIVV…EEFLDGEEAS (62 aa). Positions 212–234 are disordered; it reads SQDHKRVGDKDTGPNTGGMGAYS. The span at 213-223 shows a compositional bias: basic and acidic residues; sequence QDHKRVGDKDT. Mg(2+)-binding residues include E286 and N288.

Belongs to the GARS family. Mg(2+) serves as cofactor. The cofactor is Mn(2+).

It catalyses the reaction 5-phospho-beta-D-ribosylamine + glycine + ATP = N(1)-(5-phospho-beta-D-ribosyl)glycinamide + ADP + phosphate + H(+). It participates in purine metabolism; IMP biosynthesis via de novo pathway; N(1)-(5-phospho-D-ribosyl)glycinamide from 5-phospho-alpha-D-ribose 1-diphosphate: step 2/2. The polypeptide is Phosphoribosylamine--glycine ligase (Vibrio vulnificus (strain CMCP6)).